A 133-amino-acid polypeptide reads, in one-letter code: MDPLPRRASLQNTGNVGEGWVRQYLCQQGWQILAQRWRCPWGELDLVAHKADVLIFVEVKTRSPGSWDRGGLLAVGIPKQRRLIRAAQAFLSQHPHLSELSCRFDVALIERRASGEGVSYALVDYLQAAFEIC.

It belongs to the UPF0102 family.

In Synechococcus sp. (strain JA-3-3Ab) (Cyanobacteria bacterium Yellowstone A-Prime), this protein is UPF0102 protein CYA_0680.